A 216-amino-acid chain; its full sequence is Somatotropin (216 aa).

Positions 1-26 (MAAGPRTSVLLAFALLCLPWTQEVGA) are cleaved as a signal peptide. H45 provides a ligand contact to Zn(2+). C78 and C189 are disulfide-bonded. S131 is modified (phosphoserine). E198 serves as a coordination point for Zn(2+). Residues C206 and C214 are joined by a disulfide bond.

Belongs to the somatotropin/prolactin family.

It localises to the secreted. Its function is as follows. Plays an important role in growth control. Its major role in stimulating body growth is to stimulate the liver and other tissues to secrete IGF1. It stimulates both the differentiation and proliferation of myoblasts. It also stimulates amino acid uptake and protein synthesis in muscle and other tissues. The chain is Somatotropin (GH1) from Hippopotamus amphibius (Hippopotamus).